The primary structure comprises 770 residues: U3 small nucleolar RNA-associated protein 14 homolog A (770 aa).

Over residues 1 to 17 the composition is skewed to polar residues; sequence MNANQAAESNLLASNQQ. Residues 1–65 are disordered; it reads MNANQAAESN…GKDRQKLADR (65 aa). Phosphoserine occurs at positions 30, 32, and 53. Residues 41–68 adopt a coiled-coil conformation; the sequence is ERKHQKLLESISSLNGKDRQKLADRSEA. Residues 56–65 are compositionally biased toward basic and acidic residues; sequence GKDRQKLADR. Ser-78 and Ser-82 each carry phosphoserine. Position 206 is a phosphothreonine (Thr-206). 2 coiled-coil regions span residues 217 to 291 and 318 to 348; these read SLEE…DKAR and LEAR…EEEG. 3 disordered regions span residues 334–361, 392–455, and 467–505; these read LTQK…LVPD, KDLE…SSQE, and LRTE…RPER. 2 stretches are compositionally biased toward acidic residues: residues 343–358 and 396–410; these read ESEE…EEPL and DPAE…ESEE. Phosphoserine is present on residues Ser-406 and Ser-408. A compositionally biased stretch (basic and acidic residues) spans 411 to 444; it reads EKAVVEEETLLKEFEERRSLRQKSELNHMAEPVH. Lys-449 participates in a covalent cross-link: Glycyl lysine isopeptide (Lys-Gly) (interchain with G-Cter in SUMO2). Position 453 is a phosphoserine (Ser-453). Phosphoserine is present on Ser-567. Position 588 is a citrulline (Arg-588). Residue Lys-732 forms a Glycyl lysine isopeptide (Lys-Gly) (interchain with G-Cter in SUMO2) linkage.

The protein belongs to the UTP14 family. In terms of assembly, interacts with DHX37. Post-translationally, citrullinated by PADI4.

The protein localises to the nucleus. Its subcellular location is the nucleolus. May be required for ribosome biogenesis. This Bos taurus (Bovine) protein is U3 small nucleolar RNA-associated protein 14 homolog A (UTP14A).